We begin with the raw amino-acid sequence, 691 residues long: Threonine--tRNA ligase (691 aa).

The interval 1 to 22 (MSVPAQPAPGADGGDPRQPIRV) is disordered. Residues 1–73 (MSVPAQPAPG…DADAEVTPIA (73 aa)) enclose the TGS domain. The catalytic stretch occupies residues 268 to 574 (DHRKLGVELD…LTEHYAGAFP (307 aa)). Residues cysteine 373, histidine 424, and histidine 551 each coordinate Zn(2+).

This sequence belongs to the class-II aminoacyl-tRNA synthetase family. In terms of assembly, homodimer. The cofactor is Zn(2+).

Its subcellular location is the cytoplasm. The catalysed reaction is tRNA(Thr) + L-threonine + ATP = L-threonyl-tRNA(Thr) + AMP + diphosphate + H(+). Functionally, catalyzes the attachment of threonine to tRNA(Thr) in a two-step reaction: L-threonine is first activated by ATP to form Thr-AMP and then transferred to the acceptor end of tRNA(Thr). Also edits incorrectly charged L-seryl-tRNA(Thr). The polypeptide is Threonine--tRNA ligase (Mycobacterium marinum (strain ATCC BAA-535 / M)).